Consider the following 128-residue polypeptide: Cyclic ether formation enzyme gkaZ (128 aa).

The signal sequence occupies residues 1–36; sequence MTTARALSDGLAYLLACFNAFCIQAHLTSRFSPAFS. The next 2 helical transmembrane spans lie at 61–81 and 107–127; these read LRYMFVSLNAGLGLLLALPGW and WLLHFLSHLVLLSITMAAIYV.

This sequence belongs to the cyclic ether formation enzyme xenC family.

It is found in the membrane. It functions in the pathway mycotoxin biosynthesis. Its function is as follows. Cyclic ether formation enzyme; part of the gene cluster that mediates the biosynthesis of GKK1032, fungal natural products containing a macrocyclic para-cyclophane connected to a decahydrofluorene ring system that show potent antitumor activities. Within the pathway, gkaZ functions synergistically with gkaB and gkaX to form the cyclophane. The pathway begins with the PKS-NRPS gkaA which, with the help of the trans-enoyl reductase gkaC, synthesizes the polyketide-tyrosyl acyl thioester product which can be reductively off-loaded by the terminal reductase (R) domain in gkaA. The alpha/beta hydrolase gkaG is then required to catalyze the subsequent Knoevenagel condensation that affords the 3-pyrrolin-2-one ring, whereas the three proteins gkaB, gkaX and gkaZ then function synergistically to form the cyclophane. This Penicillium citrinum protein is Cyclic ether formation enzyme gkaZ.